The primary structure comprises 496 residues: MHAKSLTELRAALAAKECSAVELAQLYLKRIDAARDLNAFVHVDADLTLAQAKAADAELARGAGGALTGLPIAHKDVFVTRGWRSTAGSKMLANYESPFDATVVARLQAAGMVTLGKTNMDEFAMGSSNENSAFGAVKNPWDTNAVPGGSSGGSSAAVAARLAPAATGTDTGGSIRQPASFAGVTGIKPTYGRVSRYGMIAFASSLDQGGPMAQSASDCALLLNAMSGFDERDSTSLEREDEDFTRHLGQPWAAGNDAGKPLAGLRIGLPNEYFGDGLADDVRASIDAALKQYEALGATLVPVSLPKTELSIPVYYVIAPAEASSNLSRFDGVRFGHRAAQYGDLLDMYKKSRAEGFGPEVKRRILVGAYVLSHGYYDAYYLQAQKIRRIIAQDFQEAFKSCDVIMGPASPTVAWDLGSKGDDPVQMYLADIYTLSVSLAGLPGMSVPCGFGASANAKRPVGLQIIGNYFNEARMLQVADAFQRATDWHKQVPAGV.

Catalysis depends on charge relay system residues K75 and S150. The active-site Acyl-ester intermediate is the S174.

The protein belongs to the amidase family. GatA subfamily. In terms of assembly, heterotrimer of A, B and C subunits.

The enzyme catalyses L-glutamyl-tRNA(Gln) + L-glutamine + ATP + H2O = L-glutaminyl-tRNA(Gln) + L-glutamate + ADP + phosphate + H(+). Functionally, allows the formation of correctly charged Gln-tRNA(Gln) through the transamidation of misacylated Glu-tRNA(Gln) in organisms which lack glutaminyl-tRNA synthetase. The reaction takes place in the presence of glutamine and ATP through an activated gamma-phospho-Glu-tRNA(Gln). The sequence is that of Glutamyl-tRNA(Gln) amidotransferase subunit A from Burkholderia ambifaria (strain ATCC BAA-244 / DSM 16087 / CCUG 44356 / LMG 19182 / AMMD) (Burkholderia cepacia (strain AMMD)).